We begin with the raw amino-acid sequence, 530 residues long: RNA-binding protein 39 (530 aa).

Residues 1-146 form a disordered region; that stretch reads MADDIDIEAM…PVREPIDNLT (146 aa). N-acetylalanine is present on Ala2. Over residues 14 to 32 the composition is skewed to basic and acidic residues; that stretch reads PYKKDENKLSSANGHEERS. Basic residues-rich tracts occupy residues 33–56 and 64–95; these read KKRK…KERK and KKSK…RGRY. Tyr95 carries the phosphotyrosine modification. Ser97 and Ser100 each carry phosphoserine. Lys111 is covalently cross-linked (Glycyl lysine isopeptide (Lys-Gly) (interchain with G-Cter in SUMO2)). The residue at position 117 (Ser117) is a Phosphoserine. Lys119 participates in a covalent cross-link: Glycyl lysine isopeptide (Lys-Gly) (interchain with G-Cter in SUMO2). Residues 119 to 130 show a composition bias toward basic residues; that stretch reads KLSRRRSRSKSP. Ser121 and Ser136 each carry phosphoserine. Residues 131-146 are compositionally biased toward basic and acidic residues; it reads FRKDKSPVREPIDNLT. Thr146 carries the phosphothreonine modification. One can recognise an RRM 1 domain in the interval 153–230; it reads RTVFCMQLAA…VPIIVQASQA (78 aa). A Glycyl lysine isopeptide (Lys-Gly) (interchain with G-Cter in SUMO2) cross-link involves residue Lys244. One can recognise an RRM 2 domain in the interval 250 to 328; sequence MRLYVGSLHF…RPMKVGHVTE (79 aa). The segment at 291-355 is activating domain; it reads KGYGFITFSD…RTGIDLGTTG (65 aa). Residues 291 to 406 form an interaction with JUN region; sequence KGYGFITFSD…IDLQTRLSQQ (116 aa). Phosphoserine is present on residues Ser334, Ser337, and Ser341. An interaction with ESR1 and ESR2 region spans residues 355–406; the sequence is GRLQLMARLAEGTGLQIPPAAQQALQMSGSLAFGAVAEFSFVIDLQTRLSQQ. Residues 406–530 form an interaction with NCOA6 region; the sequence is QTEASALAAA…ATQLLVPSRR (125 aa). The RRM 3 domain maps to 445–508; it reads EIKDDVIEEC…KMITAAYVPL (64 aa).

Belongs to the splicing factor SR family. As to quaternary structure, interacts with NCOA6 and JUN. Interacts with ESR1 and ESR2, in the presence of estradiol (E2). Interacts with RSRC1 (via Arg/Ser-rich domain). Interacts with SF3B1. Interacts with ZNF106 (via N-terminus). In terms of processing, aryl sulfonamide anticancer drugs, such as indisulam (E7070) or E7820, promote ubiquitination and subsequent degradation by the DCX(DCAF15) complex. RBM39 degradation results in splicing defects and death in cancer cell lines. Aryl sulfonamide anticancer drugs change the substrate specificity of DCAF15 by acting as a molecular glue that promotes binding between DCAF15 and weak affinity interactor RBM39. As to expression, widely expressed. Highly expressed in pancreas, skeletal muscle, lung and brain. Expressed at intermediate level in kidney, liver and heart.

The protein resides in the nucleus speckle. Its function is as follows. RNA-binding protein that acts as a pre-mRNA splicing factor. Acts by promoting exon inclusion via regulation of exon cassette splicing. Also acts as a transcriptional coactivator for steroid nuclear receptors ESR1/ER-alpha and ESR2/ER-beta, and JUN/AP-1, independently of the pre-mRNA splicing factor activity. This Homo sapiens (Human) protein is RNA-binding protein 39.